The primary structure comprises 367 residues: MAQKTPTKGTRSSPRKKAWGSPIKATAKFQSDIFSVEDFADLSNRSWAEVTEEDDELASRLEEERRCKSESRRKGQPKRAQNSQNKPKFVRSLELTNEVFQSTSSRRSQRSKSRTRNGDTITTVEEHTETVVMESSSGPISRKRCLSNASTINEGASPSKRRPETGKSNRKAPRGRLFTNGGSDSSSVASSPSRRDHWEEPTLGWCTDEAVLKRRSREIDRAKEKAVYQRYTSEVPLRDRIKGQHPRTPNKLINFSRRSWDTQIKKWKRSLYEYCGEEPSDSVNTSFCYSDSDALSEAGDNDKEIENRSVLRDLVIPVTMRPEVDSMASLLGKFDVDSQMGMDESTLKASTNTDPSAPTDFSKMSSH.

A compositionally biased stretch (polar residues) spans 1 to 12 (MAQKTPTKGTRS). Disordered stretches follow at residues 1-24 (MAQKTPTKGTRSSPRKKAWGSPIK) and 49-200 (EVTE…HWEE). The span at 57-73 (LASRLEEERRCKSESRR) shows a compositional bias: basic and acidic residues. The segment covering 147 to 156 (SNASTINEGA) has biased composition (polar residues). The segment covering 183-192 (SDSSSVASSP) has biased composition (low complexity). The segment at 206-275 (CTDEAVLKRR…KWKRSLYEYC (70 aa)) is RNA-binding. Residues 342 to 367 (MDESTLKASTNTDPSAPTDFSKMSSH) form a disordered region. The segment covering 347–356 (LKASTNTDPS) has biased composition (polar residues).

The protein belongs to the SLBP family. Post-translationally, ubiquitinated by the CBC(fem-1) (Cul2-ElonginB-ElonginC) E3 ubiquitin-protein ligase complex, leading to its degradation.

Its function is as follows. Involved in histone pre-mRNA 3' processing. Required for chromosome condensation, progression of cell death and morphogenesis. The chain is Histone RNA hairpin-binding protein (cdl-1) from Caenorhabditis elegans.